Consider the following 469-residue polypeptide: 3-isopropylmalate dehydratase large subunit (469 aa).

[4Fe-4S] cluster contacts are provided by cysteine 349, cysteine 410, and cysteine 413.

It belongs to the aconitase/IPM isomerase family. LeuC type 1 subfamily. In terms of assembly, heterodimer of LeuC and LeuD. It depends on [4Fe-4S] cluster as a cofactor.

It catalyses the reaction (2R,3S)-3-isopropylmalate = (2S)-2-isopropylmalate. Its pathway is amino-acid biosynthesis; L-leucine biosynthesis; L-leucine from 3-methyl-2-oxobutanoate: step 2/4. Functionally, catalyzes the isomerization between 2-isopropylmalate and 3-isopropylmalate, via the formation of 2-isopropylmaleate. This is 3-isopropylmalate dehydratase large subunit from Aromatoleum aromaticum (strain DSM 19018 / LMG 30748 / EbN1) (Azoarcus sp. (strain EbN1)).